The primary structure comprises 210 residues: Holliday junction branch migration complex subunit RuvA (210 aa).

A domain I region spans residues 1–70 (MISYLKGNPI…DEQPILYGFA (70 aa)). The tract at residues 71-149 (TAAERELFRQ…QWRKLVGITL (79 aa)) is domain II. Residues 150–160 (PSTSAIPSLEV) form a flexible linker region. The tract at residues 160-210 (VLEDVEMTLLALGYTNEEINKAISTLSQDNQMLKNTNSEEWIREAIAWLSQ) is domain III.

It belongs to the RuvA family. As to quaternary structure, homotetramer. Forms an RuvA(8)-RuvB(12)-Holliday junction (HJ) complex. HJ DNA is sandwiched between 2 RuvA tetramers; dsDNA enters through RuvA and exits via RuvB. An RuvB hexamer assembles on each DNA strand where it exits the tetramer. Each RuvB hexamer is contacted by two RuvA subunits (via domain III) on 2 adjacent RuvB subunits; this complex drives branch migration. In the full resolvosome a probable DNA-RuvA(4)-RuvB(12)-RuvC(2) complex forms which resolves the HJ.

Its subcellular location is the cytoplasm. Functionally, the RuvA-RuvB-RuvC complex processes Holliday junction (HJ) DNA during genetic recombination and DNA repair, while the RuvA-RuvB complex plays an important role in the rescue of blocked DNA replication forks via replication fork reversal (RFR). RuvA specifically binds to HJ cruciform DNA, conferring on it an open structure. The RuvB hexamer acts as an ATP-dependent pump, pulling dsDNA into and through the RuvAB complex. HJ branch migration allows RuvC to scan DNA until it finds its consensus sequence, where it cleaves and resolves the cruciform DNA. This Rippkaea orientalis (strain PCC 8801 / RF-1) (Cyanothece sp. (strain PCC 8801)) protein is Holliday junction branch migration complex subunit RuvA.